The chain runs to 464 residues: Trigger factor (464 aa).

In terms of domain architecture, PPIase FKBP-type spans 166–245; that stretch reads GDFLTIDITA…VKAVKERELP (80 aa). The disordered stretch occupies residues 426-464; it reads FVRPGGEEEAPAAEVTEADTAEGEATEVPAEDEKAEAKA. Over residues 432 to 455 the composition is skewed to acidic residues; the sequence is EEEAPAAEVTEADTAEGEATEVPA.

Belongs to the FKBP-type PPIase family. Tig subfamily.

The protein resides in the cytoplasm. The enzyme catalyses [protein]-peptidylproline (omega=180) = [protein]-peptidylproline (omega=0). Its function is as follows. Involved in protein export. Acts as a chaperone by maintaining the newly synthesized protein in an open conformation. Functions as a peptidyl-prolyl cis-trans isomerase. The polypeptide is Trigger factor (Pseudarthrobacter chlorophenolicus (strain ATCC 700700 / DSM 12829 / CIP 107037 / JCM 12360 / KCTC 9906 / NCIMB 13794 / A6) (Arthrobacter chlorophenolicus)).